The chain runs to 226 residues: Exopolysaccharide production protein ExoY (226 aa).

A helical membrane pass occupies residues 34–54 (VLAASVALLLFSPLFLLIMAL).

The protein belongs to the bacterial sugar transferase family.

The protein localises to the cell membrane. The protein operates within glycan metabolism; exopolysaccharide biosynthesis. Its function is as follows. Needed for the addition of the first sugar (galactose) to the isoprenoid carrier. May function as a sugar transferase. This is Exopolysaccharide production protein ExoY (exoY) from Rhizobium meliloti (strain 1021) (Ensifer meliloti).